The chain runs to 380 residues: uncharacterized protein (380 aa).

This is an uncharacterized protein from Homo sapiens (Human).